The chain runs to 279 residues: Ribosomal RNA small subunit methyltransferase A (279 aa).

S-adenosyl-L-methionine-binding residues include H11, L13, G42, E63, D88, and N104.

It belongs to the class I-like SAM-binding methyltransferase superfamily. rRNA adenine N(6)-methyltransferase family. RsmA subfamily.

It localises to the cytoplasm. It catalyses the reaction adenosine(1518)/adenosine(1519) in 16S rRNA + 4 S-adenosyl-L-methionine = N(6)-dimethyladenosine(1518)/N(6)-dimethyladenosine(1519) in 16S rRNA + 4 S-adenosyl-L-homocysteine + 4 H(+). Specifically dimethylates two adjacent adenosines (A1518 and A1519) in the loop of a conserved hairpin near the 3'-end of 16S rRNA in the 30S particle. May play a critical role in biogenesis of 30S subunits. This chain is Ribosomal RNA small subunit methyltransferase A, found in Synechococcus sp. (strain JA-3-3Ab) (Cyanobacteria bacterium Yellowstone A-Prime).